A 574-amino-acid chain; its full sequence is Egalitarian protein homolog (574 aa).

The segment at 259–278 is disordered; that stretch reads LNEDGSENGSDEGEETNNNG. Residues 262-273 are compositionally biased toward acidic residues; the sequence is DGSENGSDEGEE. Residues 312-414 enclose the 3'-5' exonuclease domain; the sequence is NMEKKVVGLD…SLLQHEKFNK (103 aa).

In terms of assembly, component of a dynein-regulating complex composed of at least bicd-1, dlc-1 and egal-1.

It localises to the nucleus envelope. Functionally, part of a complex with bicd-1 and dlc-1, which is recruited to the nuclear envelope by unc-83, where in turn, it recruits dynein to the nuclear surface and regulates nuclear migration in hypodermal precursor cells. The sequence is that of Egalitarian protein homolog from Caenorhabditis elegans.